Here is an 840-residue protein sequence, read N- to C-terminus: Heat shock 70 kDa protein 4 (840 aa).

Lysine 53 bears the N6-acetyllysine mark. At serine 76 the chain carries Phosphoserine. 2 positions are modified to phosphotyrosine: tyrosine 89 and tyrosine 336. Residues serine 393 and serine 415 each carry the phosphoserine modification. Lysine 430 bears the N6-acetyllysine mark. Residues 500–575 form a disordered region; the sequence is VHKSEENEEP…QAKKAKVKTS (76 aa). Over residues 514-533 the composition is skewed to basic and acidic residues; sequence QNAKEEEKMQVDQEEPHVEE. Threonine 538 carries the post-translational modification Phosphothreonine. Residues serine 546 and serine 647 each carry the phosphoserine modification. Position 660 is a phosphotyrosine (tyrosine 660). Lysine 679 carries the post-translational modification N6-acetyllysine. Serine 756 carries the post-translational modification Phosphoserine. An N6-methyllysine modification is found at lysine 773. The interval 779 to 840 is disordered; the sequence is CSPIISKPKP…DKKLPEMDID (62 aa). Basic and acidic residues-rich tracts occupy residues 788 to 799 and 829 to 840; these read PKVEPPKEEQKN and DSDKKLPEMDID.

It belongs to the heat shock protein 70 family. Interacts with TJP1/ZO-1.

It is found in the cytoplasm. The chain is Heat shock 70 kDa protein 4 (HSPA4) from Homo sapiens (Human).